The primary structure comprises 150 residues: Large ribosomal subunit protein bL9 (150 aa).

Belongs to the bacterial ribosomal protein bL9 family.

In terms of biological role, binds to the 23S rRNA. In Vesicomyosocius okutanii subsp. Calyptogena okutanii (strain HA), this protein is Large ribosomal subunit protein bL9.